Here is a 418-residue protein sequence, read N- to C-terminus: Glutamyl-tRNA reductase (418 aa).

Substrate-binding positions include 49-52 (TCNR), S109, 114-116 (EPQ), and Q120. The active-site Nucleophile is C50. 189 to 194 (GAGETI) contacts NADP(+).

Belongs to the glutamyl-tRNA reductase family. Homodimer.

The catalysed reaction is (S)-4-amino-5-oxopentanoate + tRNA(Glu) + NADP(+) = L-glutamyl-tRNA(Glu) + NADPH + H(+). Its pathway is porphyrin-containing compound metabolism; protoporphyrin-IX biosynthesis; 5-aminolevulinate from L-glutamyl-tRNA(Glu): step 1/2. Its function is as follows. Catalyzes the NADPH-dependent reduction of glutamyl-tRNA(Glu) to glutamate 1-semialdehyde (GSA). The protein is Glutamyl-tRNA reductase of Enterobacter sp. (strain 638).